We begin with the raw amino-acid sequence, 92 residues long: Small ribosomal subunit protein bS18 (92 aa).

Belongs to the bacterial ribosomal protein bS18 family. In terms of assembly, part of the 30S ribosomal subunit. Forms a tight heterodimer with protein bS6.

Binds as a heterodimer with protein bS6 to the central domain of the 16S rRNA, where it helps stabilize the platform of the 30S subunit. The sequence is that of Small ribosomal subunit protein bS18 from Ralstonia nicotianae (strain ATCC BAA-1114 / GMI1000) (Ralstonia solanacearum).